A 765-amino-acid chain; its full sequence is 5-methyltetrahydropteroyltriglutamate--homocysteine methyltransferase (765 aa).

5-methyltetrahydropteroyltri-L-glutamate-binding positions include 18–21 and Lys-114; that span reads REWK. L-homocysteine contacts are provided by residues 437-439 and Glu-490; that span reads IGS. L-methionine-binding positions include 437-439 and Glu-490; that span reads IGS. Trp-567 is a binding site for 5-methyltetrahydropteroyltri-L-glutamate. Asp-605 is a binding site for L-homocysteine. Asp-605 provides a ligand contact to L-methionine. Glu-611 contacts 5-methyltetrahydropteroyltri-L-glutamate. His-647, Cys-649, and Glu-671 together coordinate Zn(2+). His-700 acts as the Proton donor in catalysis. Residue Cys-732 coordinates Zn(2+).

Belongs to the vitamin-B12 independent methionine synthase family. The cofactor is Zn(2+).

The catalysed reaction is 5-methyltetrahydropteroyltri-L-glutamate + L-homocysteine = tetrahydropteroyltri-L-glutamate + L-methionine. Its pathway is amino-acid biosynthesis; L-methionine biosynthesis via de novo pathway; L-methionine from L-homocysteine (MetE route): step 1/1. Catalyzes the transfer of a methyl group from 5-methyltetrahydrofolate to homocysteine resulting in methionine formation. In Listeria welshimeri serovar 6b (strain ATCC 35897 / DSM 20650 / CCUG 15529 / CIP 8149 / NCTC 11857 / SLCC 5334 / V8), this protein is 5-methyltetrahydropteroyltriglutamate--homocysteine methyltransferase.